The following is a 234-amino-acid chain: 2-C-methyl-D-erythritol 4-phosphate cytidylyltransferase (234 aa).

The protein belongs to the IspD/TarI cytidylyltransferase family. IspD subfamily.

The enzyme catalyses 2-C-methyl-D-erythritol 4-phosphate + CTP + H(+) = 4-CDP-2-C-methyl-D-erythritol + diphosphate. The protein operates within isoprenoid biosynthesis; isopentenyl diphosphate biosynthesis via DXP pathway; isopentenyl diphosphate from 1-deoxy-D-xylulose 5-phosphate: step 2/6. In terms of biological role, catalyzes the formation of 4-diphosphocytidyl-2-C-methyl-D-erythritol from CTP and 2-C-methyl-D-erythritol 4-phosphate (MEP). This Pseudomonas paraeruginosa (strain DSM 24068 / PA7) (Pseudomonas aeruginosa (strain PA7)) protein is 2-C-methyl-D-erythritol 4-phosphate cytidylyltransferase.